We begin with the raw amino-acid sequence, 196 residues long: Agamous-like MADS-box protein AGL70 (196 aa).

The 61-residue stretch at 1–61 (MGRRKVEIKR…GKLYDSASGD (61 aa)) folds into the MADS-box domain. Residues 8 to 15 (IKRIENKS) carry the Nuclear localization signal motif. In terms of domain architecture, K-box spans 80–170 (ALDLAEKIRN…ASQVGKKTFL (91 aa)).

In terms of tissue distribution, mostly expressed in roots, leaves and flowers, and, to a lower extent, in inflorescence, siliques, pollen and shoots.

It is found in the nucleus. Functionally, probable transcription factor involved in the negative regulation of flowering time, probably through the photoperiodic and vernalization pathways; more efficient in cv. Landsberg erecta than in cv. Columbia background. Prevents premature flowering. Involved in the modulation of vernalization impact on flowering according to genotype acclimation to altitude. The chain is Agamous-like MADS-box protein AGL70 from Arabidopsis thaliana (Mouse-ear cress).